Consider the following 43-residue polypeptide: Protein PsbN (43 aa).

The helical transmembrane segment at 5–27 threads the bilayer; the sequence is TVFSIFISCLLLSLTGYSLYTAF.

This sequence belongs to the PsbN family.

It is found in the plastid. The protein localises to the chloroplast thylakoid membrane. In terms of biological role, may play a role in photosystem I and II biogenesis. In Chlorokybus atmophyticus (Soil alga), this protein is Protein PsbN.